The following is a 1821-amino-acid chain: Latent-transforming growth factor beta-binding protein 2 (1821 aa).

A signal peptide spans 1-35 (MRPRTKARSPGRALRNPWRGFLPLTLALFVGAGHA). Disordered regions lie at residues 38-58 (DPVGRYEPAGGDANRLRRPGG) and 81-165 (GLQP…RLTG). The heparin-binding stretch occupies residues 94 to 115 (SPRRPTEAEARRPSRAQQSRRV). Composition is skewed to low complexity over residues 108 to 120 (RAQQSRRVQPPAQ) and 129 to 145 (QQQPAPRTRAAPALPRL). Residue N181 is glycosylated (N-linked (GlcNAc...) asparagine). Residues 187-219 (IKPVCEPPCQNRGSCSRPQLCVCRSGFRGARCE) form the EGF-like 1 domain. Intrachain disulfides connect C191/C201, C195/C207, and C209/C218. The disordered stretch occupies residues 229-339 (PQNSRLAPRR…AVPLEHPSSP (111 aa)). Positions 232 to 249 (SRLAPRRWAERSPNLRRS) are heparin-binding. Over residues 262–274 (PPAPQSPPAPQSP) the composition is skewed to pro residues. Composition is skewed to polar residues over residues 280–292 (SGLSQTHPSQQHV) and 304–314 (ATASSQLSSNA). N343 carries N-linked (GlcNAc...) asparagine glycosylation. 344–354 (LTEKIKKIKIV) lines the heparin pocket. The Cell attachment site motif lies at 375-377 (RGD). One can recognise an EGF-like 2 domain in the interval 396–428 (RIYFCQIPCLNGGRCIGRDECWCPANSTGKFCH). 3 disulfide bridges follow: C400-C410, C404-C416, and C418-C427. N-linked (GlcNAc...) asparagine glycosylation occurs at N421. S506 carries the phosphoserine modification. The tract at residues 510–544 (RPPPWLPASPGHSLWDSNNIPARSGEPPRPLPPAA) is disordered. The region spanning 552 to 604 (GRCYLNTVNGQCANPLLELTTQEDCCGSVGAFWGVTLCAPCPPRPASPVIENG) is the TB 1 domain. Cystine bridges form between C554–C576, C563–C589, and C577–C592. N-linked (GlcNAc...) asparagine glycosylation is present at N616. The EGF-like 3; calcium-binding domain maps to 622 to 662 (DINECLTLGLCKDAECVNTRGSYLCTCRPGLMLDPSRSRCV). 7 disulfides stabilise this stretch: C626-C637, C632-C646, C648-C661, C674-C696, C683-C709, C697-C712, and C698-C724. The TB 2 domain occupies 672-724 (GLCYRSLGPGTCTLPLAQRITKQICCCSRVGKAWGSECEKCPLPGTEAFREIC). Residues 744-757 (AEEEELARPPREQG) are compositionally biased toward basic and acidic residues. A disordered region spans residues 744–772 (AEEEELARPPREQGQRSSGALPGPAERQP). The N-linked (GlcNAc...) asparagine glycan is linked to N811. The EGF-like 4 domain maps to 844-886 (GIDRCAAGATNVCGPGTCVNLPDGYRCVCSPGYQLHPSQAYCT). 49 disulfide bridges follow: C848/C861, C856/C870, C872/C885, C891/C902, C896/C911, C913/C928, C934/C945, C940/C954, C956/C968, C974/C985, C980/C994, C997/C1008, C1014/C1025, C1020/C1034, C1036/C1049, C1055/C1066, C1061/C1075, C1078/C1091, C1097/C1108, C1103/C1117, C1120/C1133, C1139/C1151, C1146/C1160, C1162/C1174, C1180/C1192, C1186/C1201, C1203/C1216, C1222/C1233, C1228/C1242, C1244/C1257, C1263/C1276, C1271/C1285, C1289/C1301, C1307/C1319, C1313/C1328, C1330/C1343, C1349/C1361, C1356/C1370, C1372/C1386, C1413/C1436, C1423/C1448, C1437/C1451, C1438/C1463, C1489/C1502, C1497/C1511, C1513/C1526, C1532/C1542, C1537/C1551, and C1553/C1566. Positions 887 to 929 (DDNECLRDPCKGKGRCINRVGSYSCFCYPGYTLATSGATQECQ) constitute an EGF-like 5; calcium-binding domain. One can recognise an EGF-like 6; calcium-binding domain in the interval 930 to 969 (DINECEQPGVCSGGQCTNTEGSYHCECDQGYIMVRKGHCQ). In terms of domain architecture, EGF-like 7; calcium-binding spans 970 to 1009 (DINECRHPGTCPDGRCVNSPGSYTCLACEEGYRGQSGSCV). In terms of domain architecture, EGF-like 8; calcium-binding spans 1010–1050 (DVNECLTPGVCAHGKCTNLEGSFRCSCEQGYEVTSDEKGCQ). An EGF-like 9; calcium-binding domain is found at 1051-1092 (DVDECASRASCPTGLCLNTEGSFACSACENGYWVNEDGTACE). The region spanning 1093–1134 (DLDECAFPGVCPSGVCTNTAGSFSCKDCDGGYRPSPLGDSCE) is the EGF-like 10; calcium-binding domain. The EGF-like 11; calcium-binding domain occupies 1135 to 1175 (DVDECEDPQSSCLGGECKNTVGSYQCLCPQGFQLANGTVCE). N-linked (GlcNAc...) asparagine glycosylation is present at N1170. Residues 1176–1217 (DVNECMGEEHCAPHGECLNSHGSFFCLCAPGFVSAEGGTSCQ) enclose the EGF-like 12; calcium-binding domain. In terms of domain architecture, EGF-like 13; calcium-binding spans 1218-1258 (DVDECATTDPCVGGHCVNTEGSFNCLCETGFQPSPESGECV). Positions 1259–1302 (DIDECEDYGDPVCGTWKCENSPGSYRCVLGCQPGFHMAPNGDCI) constitute an EGF-like 14; calcium-binding domain. Residues 1303–1344 (DIDECANDTMCGSHGFCDNTDGSFRCLCDQGFEISPSGWDCV) form the EGF-like 15; calcium-binding domain. N1309 carries N-linked (GlcNAc...) asparagine glycosylation. The EGF-like 16; calcium-binding domain maps to 1345-1387 (DVNECELMLAVCGAALCENVEGSFLCLCASDLEEYDAQEGHCR). In terms of domain architecture, TB 3 spans 1411–1463 (MDCYSGQKGHAPCSSVLGRNTTQAECCCTQGASWGDACDLCPSEDSAEFSEIC). N1430 is a glycosylation site (N-linked (GlcNAc...) asparagine). Residues 1485 to 1527 (DADECVIFGPGLCPNGRCLNTVPGYVCLCNPGFHYDASHKKCE) form the EGF-like 17; calcium-binding domain. The 40-residue stretch at 1528-1567 (DHDECQDLACENGECVNTEGSFHCFCSPPLTLDLSQQRCM) folds into the EGF-like 18; calcium-binding domain. N1568 is a glycosylation site (N-linked (GlcNAc...) asparagine). Positions 1584–1636 (DICWKKVTNDVCSEPLRGHRTTYTECCCQDGEAWSQQCALCPPRSSEVYAQLC) constitute a TB 4 domain. 10 disulfides stabilise this stretch: C1586–C1609, C1595–C1621, C1610–C1624, C1611–C1636, C1737–C1748, C1743–C1757, C1759–C1772, C1778–C1793, C1788–C1802, and C1804–C1817. The tract at residues 1639-1821 (ARIEAEREAG…AGPPHCTAKE (183 aa)) is C-terminal domain. In terms of domain architecture, EGF-like 19; calcium-binding spans 1733-1773 (QAEECGILNGCENGRCVRVREGYTCDCFEGFQLDAAHMACV). Residues 1774-1818 (DVNECDDLNGPAVLCVHGYCENTEGSYRCHCSPGYVAEAGPPHCT) enclose the EGF-like 20; calcium-binding domain.

It belongs to the LTBP family. In terms of assembly, forms part of the large latent transforming growth factor beta precursor complex; removal is essential for activation of complex. Interacts with SDC4. Interacts (via C-terminal domain) with FBN1 (via N-terminal domain) in a Ca(+2)-dependent manner. N-Glycosylated. Post-translationally, contains hydroxylated asparagine residues. As to expression, expressed in the aorta (at protein level). Expressed in lung, weakly expressed in heart, placenta, liver and skeletal muscle.

It localises to the secreted. It is found in the extracellular space. Its subcellular location is the extracellular matrix. In terms of biological role, may play an integral structural role in elastic-fiber architectural organization and/or assembly. This Homo sapiens (Human) protein is Latent-transforming growth factor beta-binding protein 2 (LTBP2).